A 311-amino-acid polypeptide reads, in one-letter code: Syndecan-1 (311 aa).

An N-terminal signal peptide occupies residues 1 to 22; it reads MRRAALWLWLCALALRLQPALL. Residues 23 to 255 lie on the Extracellular side of the membrane; the sequence is HSVAVNMPPE…GLLDRKEVLG (233 aa). Disordered stretches follow at residues 31–85 and 141–244; these read PEDQ…PDAI and TMAP…TGAS. Positions 32–42 are enriched in acidic residues; it reads EDQDGSGDDSD. A glycan (O-linked (Xyl...) (chondroitin sulfate) serine) is linked at serine 37. Residue asparagine 43 is glycosylated (N-linked (GlcNAc...) asparagine). Residues serine 45 and serine 47 are each glycosylated (O-linked (Xyl...) (heparan sulfate) serine). A compositionally biased stretch (low complexity) spans 71–84; sequence TTTATAPEPTSPDA. Composition is skewed to basic and acidic residues over residues 151–162 and 169–180; these read PHRDVQPDHHET and GRMEPHRPHVEE. O-linked (Xyl...) (chondroitin sulfate) serine glycans are attached at residues serine 204 and serine 214. Positions 215–226 are enriched in low complexity; that stretch reads GENAAGAAGEPG. A helical transmembrane segment spans residues 256-276; sequence GVIAGGLVGLIFAVCLVGFML. Over 277–311 the chain is Cytoplasmic; it reads YRMKKKDEGSYSLEEPKQANGGAYQKPTKQEEFYA. The tract at residues 285–311 is disordered; the sequence is GSYSLEEPKQANGGAYQKPTKQEEFYA. Residue serine 286 is modified to Phosphoserine.

It belongs to the syndecan proteoglycan family. As to quaternary structure, interacts with CDCP1. Interacts (via C-terminus) with TIAM1 (via PDZ domain). Interacts with MDK. Post-translationally, shedding is enhanced by a number of factors such as heparanase, thrombin or EGF. Also by stress and wound healing. PMA-mediated shedding is inhibited by TIMP3.

Its subcellular location is the membrane. It is found in the secreted. It localises to the extracellular exosome. Cell surface proteoglycan that contains both heparan sulfate and chondroitin sulfate and that links the cytoskeleton to the interstitial matrix. Regulates exosome biogenesis in concert with SDCBP and PDCD6IP. Able to induce its own expression in dental mesenchymal cells and also in the neighboring dental epithelial cells via an MSX1-mediated pathway. The protein is Syndecan-1 of Bos taurus (Bovine).